The following is a 372-amino-acid chain: Molybdopterin synthase catalytic subunit (372 aa).

Substrate-binding positions include 101–102 (HR), lysine 117, and 124–126 (KKE).

This sequence belongs to the MoaE family. MOCS2B subfamily. Heterotetramer; composed of 2 small (Mocs2A) and 2 large (Mocs2B) subunits.

Its subcellular location is the cytoplasm. The catalysed reaction is 2 [molybdopterin-synthase sulfur-carrier protein]-C-terminal-Gly-aminoethanethioate + cyclic pyranopterin phosphate + H2O = molybdopterin + 2 [molybdopterin-synthase sulfur-carrier protein]-C-terminal Gly-Gly + 2 H(+). It functions in the pathway cofactor biosynthesis; molybdopterin biosynthesis. In terms of biological role, catalytic subunit of the molybdopterin synthase complex, a complex that catalyzes the conversion of precursor Z into molybdopterin. Acts by mediating the incorporation of 2 sulfur atoms from thiocarboxylated Mocs2A into precursor Z to generate a dithiolene group. This Drosophila willistoni (Fruit fly) protein is Molybdopterin synthase catalytic subunit.